The sequence spans 144 residues: Putative 2'-deoxynucleoside 5'-phosphate N-hydrolase 1 (144 aa).

Residues Tyr7–Arg13, Tyr22, His39, Glu83, and Ser107–Met109 contribute to the substrate site.

Belongs to the 2'-deoxynucleoside 5'-phosphate N-hydrolase 1 family. Monomer and homodimer.

It is found in the cytoplasm. The protein localises to the nucleus. It carries out the reaction a pyrimidine 2'-deoxyribonucleoside 5'-phosphate + H2O = a pyrimidine nucleobase + 2-deoxy-D-ribose 5-phosphate. The catalysed reaction is a purine 2'-deoxyribonucleoside 5'-phosphate + H2O = a purine nucleobase + 2-deoxy-D-ribose 5-phosphate. In terms of biological role, catalyzes the cleavage of the N-glycosidic bond of deoxyribonucleoside 5'-monophosphates to yield deoxyribose 5-phosphate and a purine or pyrimidine base. The sequence is that of Putative 2'-deoxynucleoside 5'-phosphate N-hydrolase 1 from Trichoplax adhaerens (Trichoplax reptans).